The following is a 464-amino-acid chain: Soluble pyridine nucleotide transhydrogenase (464 aa).

FAD is bound at residue 35–44 (DSRRQVGGNC).

The protein belongs to the class-I pyridine nucleotide-disulfide oxidoreductase family. FAD is required as a cofactor.

Its subcellular location is the cytoplasm. The enzyme catalyses NAD(+) + NADPH = NADH + NADP(+). Its function is as follows. Conversion of NADPH, generated by peripheral catabolic pathways, to NADH, which can enter the respiratory chain for energy generation. The protein is Soluble pyridine nucleotide transhydrogenase of Pseudomonas fluorescens (strain Pf0-1).